The chain runs to 338 residues: RNA 3'-terminal phosphate cyclase (338 aa).

ATP is bound by residues Q103 and 283–287 (YLADQ). Residue H308 is the Tele-AMP-histidine intermediate of the active site.

This sequence belongs to the RNA 3'-terminal cyclase family. Type 1 subfamily.

Its subcellular location is the cytoplasm. The catalysed reaction is a 3'-end 3'-phospho-ribonucleotide-RNA + ATP = a 3'-end 2',3'-cyclophospho-ribonucleotide-RNA + AMP + diphosphate. Functionally, catalyzes the conversion of 3'-phosphate to a 2',3'-cyclic phosphodiester at the end of RNA. The mechanism of action of the enzyme occurs in 3 steps: (A) adenylation of the enzyme by ATP; (B) transfer of adenylate to an RNA-N3'P to produce RNA-N3'PP5'A; (C) and attack of the adjacent 2'-hydroxyl on the 3'-phosphorus in the diester linkage to produce the cyclic end product. The biological role of this enzyme is unknown but it is likely to function in some aspects of cellular RNA processing. The protein is RNA 3'-terminal phosphate cyclase of Escherichia coli O17:K52:H18 (strain UMN026 / ExPEC).